Reading from the N-terminus, the 236-residue chain is uncharacterized protein (236 aa).

Residues 117 to 160 (RYLSKQTDRNEFITTAESYIGISKHKSTNITYKLPLKEQFCNMS) form the RPE1 insert domain.

This is an uncharacterized protein from Rickettsia prowazekii (strain Madrid E).